The primary structure comprises 477 residues: MVVGDVTTSTDVLVIGAGPGGYVAAIRAAQLALDVTLVEKGEYGGACLNRGCIPSKALIHGSKLASEAGQAEELGIYADPTVALDEMINWKDGVVDQLTSGIEQLCTAAGVNLLKGTAEFADENKVRIIHQGEGQGSESLKFENCIIATGSRPIEIPGFGFEDERIVSSDGALNFDTVPDELVIVGAGYIGMELATVYSRLGSDVSVIEMLEQALPSYEEDIASIVRKRAERLGVDFHFGYTADSWAASDGKAVLTAVPADEAAHDSDIELTADRILVAVGRRPVTDTLSIDDAGVETNAQGFIPTDSTCRTNKEHIFAVGDVAGEPMLAHKGSKEGEVAAEVIAGEPAAVDYQALPAAVFTDPEIGTVGLTENEAANKGMTPVTGEFQFQASGRALTANRAEGFVRIIATKETERVIGAQIVGPEASELIAEIAAMIEMGAKLEDIGSTVHTHPTLSEAIMEAAQNAREKAIHRRN.

FAD contacts are provided by residues 39–47, Lys56, and Ala118; that span reads EKGEYGGAC. Cys47 and Cys52 are disulfide-bonded. Residues 186 to 190, Glu209, and 279 to 282 each bind NAD(+); these read GAGYI and AVGR. The FAD site is built by Asp322 and Ala330. His454 acts as the Proton acceptor in catalysis.

The protein belongs to the class-I pyridine nucleotide-disulfide oxidoreductase family. As to quaternary structure, homodimer. FAD serves as cofactor.

It is found in the cytoplasm. It catalyses the reaction N(6)-[(R)-dihydrolipoyl]-L-lysyl-[protein] + NAD(+) = N(6)-[(R)-lipoyl]-L-lysyl-[protein] + NADH + H(+). This chain is Dihydrolipoyl dehydrogenase 3 (lpdA3), found in Haloarcula marismortui (strain ATCC 43049 / DSM 3752 / JCM 8966 / VKM B-1809) (Halobacterium marismortui).